The chain runs to 2186 residues: Non-reducing polyketide synthase men2 (2186 aa).

Residues 16–255 (FFGDQTVDAL…MQLPLGTPAH (240 aa)) enclose the Starter acyltransferase (SAT) domain. The Ketosynthase family 3 (KS3) domain maps to 382–815 (SNLIAVVGQS…GGNNCVLLEE (434 aa)). Active-site for beta-ketoacyl synthase activity residues include Cys554, His690, and His729. The Malonyl-CoA:ACP transacylase (MAT) domain maps to 914-1204 (VFAFTGQGAQ…SSLVKSTLSA (291 aa)). A product template (PT) domain region spans residues 1299-1623 (TASLQQVRSE…TRRVLATVLG (325 aa)). Positions 1303–1434 (QQVRSEQING…CKLHFDKRGS (132 aa)) are N-terminal hotdog fold. The PKS/mFAS DH domain occupies 1303–1619 (QQVRSEQING…FQRLTRRVLA (317 aa)). His1335 (proton acceptor; for dehydratase activity) is an active-site residue. The tract at residues 1463 to 1619 (TGHRLPKSVV…FQRLTRRVLA (157 aa)) is C-terminal hotdog fold. The active-site Proton donor; for dehydratase activity is Asp1523. The Carrier 1 domain maps to 1666-1742 (VGDEKADAAI…GLRRAISELS (77 aa)). O-(pantetheine 4'-phosphoryl)serine is present on Ser1702. The disordered stretch occupies residues 1747 to 1785 (GPASGSVSVSSSATTTHGMTTPSSTSSAQSSQSSQTPDG). A compositionally biased stretch (low complexity) spans 1749–1783 (ASGSVSVSSSATTTHGMTTPSSTSSAQSSQSSQTP). Positions 1784–1861 (DGPGIYANAV…HVRRALGSDS (78 aa)) constitute a Carrier 2 domain. Ser1821 carries the post-translational modification O-(pantetheine 4'-phosphoryl)serine. The tract at residues 1857–1878 (LGSDSDGDSKPKSAPAPPAPEP) is disordered. Residues 1921–2163 (LFFLPDGTGY…TMPCDHLSLL (243 aa)) form a thioesterase (TE) domain region.

It depends on pantetheine 4'-phosphate as a cofactor.

The protein operates within secondary metabolite biosynthesis. In terms of biological role, non-reducing polyketide synthase; part of the gene cluster that mediates the biosynthesis of menisporopsin A, a bioactive macrocyclic polylactone. The biosynthesis of menisporopsin A is performed by a reducing (man1) and a non-reducing (men2) polyketide synthase that catalyze the formation of each menisporopsin A subunits, while the esterification and cyclolactonization activities are probably peformed by the unusual thioesterase domain of men2. First, a reduced diketide intermediate, 3-hydroxybutyryl-S-ACP is produced by men1 and transferred to men2; this is followed by a second reduced diketide which is further elongated using 3 units of malonyl-coA to form a reduced pentaketide. The cyclization of this intermediate by the PT domain forms the second subunit, 2,4-dihydroxy-6-(2-hydroxy-n-propyl)benzoyl-S-ACP. The TE domain of men2 then esterifies the secondary hydroxyl group on the side chain of the second subunit with the acyl-TE of the first subunit to form the first ester intermediate. This process occurs iteratively to form a linear tetraester intermediate. The final subunit is formed by a similar process, except that an extra malonyl-CoA is required in an additional elongation step to form a reduced hexaketide intermediate, and the carbonyl group next to the secondary hydroxyl group is reduced by a trans-acting ketoreductase. Again, the PT domain catalyzes cyclization to form the largest subunit, 2,4-dihydroxy-6-(2,4-dihydroxy-n-pentyl) benzoyl-S-ACP. Then the linear pentaester intermediate is formed. In this step, if the intermediate transfer rate is slow, intra- molecular cyclization involving the secondary hydroxyl group of the pentaester intermediate may occur to form menisporopsin B. Alternatively, transfer of the pentaester intermediate to the TE domain would allow cyclolactonization to be catalyzed by the TE to form menisporopsin A. This Menisporopsis theobromae protein is Non-reducing polyketide synthase men2.